Consider the following 367-residue polypeptide: tRNA uridine(34) hydroxylase (367 aa).

Positions 159 to 249 (EDKNSIVVDV…GIISYAHEIS (91 aa)) constitute a Rhodanese domain. Cys-213 serves as the catalytic Cysteine persulfide intermediate.

Belongs to the TrhO family.

The enzyme catalyses uridine(34) in tRNA + AH2 + O2 = 5-hydroxyuridine(34) in tRNA + A + H2O. Functionally, catalyzes oxygen-dependent 5-hydroxyuridine (ho5U) modification at position 34 in tRNAs. The polypeptide is tRNA uridine(34) hydroxylase (Leptospira borgpetersenii serovar Hardjo-bovis (strain L550)).